A 496-amino-acid chain; its full sequence is Galactan beta-1,4-galactosyltransferase GALS1 (496 aa).

A helical transmembrane segment spans residues 22–42; that stretch reads IIATLLALSLVMIVWNLPPYY. Positions 232 to 464 constitute a GT92 domain; it reads DYLYCGSSLY…AKKKVTLYNK (233 aa).

This sequence belongs to the glycosyltransferase 92 family. In terms of tissue distribution, expressed in root vasculature, mature leaves, trichomes, flowers, siliques and seeds.

The protein resides in the golgi apparatus membrane. Involved in the biosynthesis of beta-1,4-galactan. Can transfer galactose residues from UDP-galactose to beta-1,4-galactopentaose in vitro. Forms specifically beta-1,4-galactosyl linkages and can add successive beta-1,4-galactosyl residues to the acceptor. Beta-1,4-galactans are abundant polysaccharides in plant cell walls and are found as side-chain of rhamnogalacturonan I, which is a major component of pectin. The sequence is that of Galactan beta-1,4-galactosyltransferase GALS1 from Arabidopsis thaliana (Mouse-ear cress).